Consider the following 372-residue polypeptide: Actin-related protein 2/3 complex subunit 1B (372 aa).

WD repeat units lie at residues 6–45, 50–89, 94–135, 140–179, 242–280, and 324–367; these read FLVEPISCHAWNKDRTQIAICPNNHEVHIYEKSGNKWVQV, EHNGQVTGIDWAPDSNRIVTCGTDRNAYVWTLKGRTWKPT, RINR…WVCK, PIRSTVLSLDWHPNSVLLAAGSCDFKCRIFSAYIKEVEER, SETLPLLAVTFITESSLVAAGHDCFPVLFTYDSAAGKLS, and LHKN…SALK.

The protein belongs to the WD repeat ARPC1 family. In terms of assembly, component of the Arp2/3 complex composed of ACTR2/ARP2, ACTR3/ARP3, ARPC1B/p41-ARC, ARPC2/p34-ARC, ARPC3/p21-ARC, ARPC4/p20-ARC and ARPC5/p16-ARC.

It localises to the cytoplasm. The protein resides in the cytoskeleton. The protein localises to the nucleus. Functionally, component of the Arp2/3 complex, a multiprotein complex that mediates actin polymerization upon stimulation by nucleation-promoting factor (NPF). The Arp2/3 complex mediates the formation of branched actin networks in the cytoplasm, providing the force for cell motility. In addition to its role in the cytoplasmic cytoskeleton, the Arp2/3 complex also promotes actin polymerization in the nucleus, thereby regulating gene transcription and repair of damaged DNA. The Arp2/3 complex promotes homologous recombination (HR) repair in response to DNA damage by promoting nuclear actin polymerization, leading to drive motility of double-strand breaks (DSBs). The protein is Actin-related protein 2/3 complex subunit 1B (ARPC1B) of Bos taurus (Bovine).